Reading from the N-terminus, the 275-residue chain is Dermonecrotic toxin LamSicTox-alphaIV1ii (275 aa).

The active site involves histidine 5. Mg(2+)-binding residues include glutamate 25 and aspartate 27. The active-site Nucleophile is the histidine 41. 2 disulfides stabilise this stretch: cysteine 45–cysteine 51 and cysteine 47–cysteine 192. Aspartate 85 is a binding site for Mg(2+).

It belongs to the arthropod phospholipase D family. Class II subfamily. Mg(2+) serves as cofactor. In terms of tissue distribution, expressed by the venom gland.

It localises to the secreted. It carries out the reaction an N-(acyl)-sphingosylphosphocholine = an N-(acyl)-sphingosyl-1,3-cyclic phosphate + choline. It catalyses the reaction an N-(acyl)-sphingosylphosphoethanolamine = an N-(acyl)-sphingosyl-1,3-cyclic phosphate + ethanolamine. The catalysed reaction is a 1-acyl-sn-glycero-3-phosphocholine = a 1-acyl-sn-glycero-2,3-cyclic phosphate + choline. The enzyme catalyses a 1-acyl-sn-glycero-3-phosphoethanolamine = a 1-acyl-sn-glycero-2,3-cyclic phosphate + ethanolamine. Dermonecrotic toxins cleave the phosphodiester linkage between the phosphate and headgroup of certain phospholipids (sphingolipid and lysolipid substrates), forming an alcohol (often choline) and a cyclic phosphate. This toxin acts on sphingomyelin (SM). It may also act on ceramide phosphoethanolamine (CPE), lysophosphatidylcholine (LPC) and lysophosphatidylethanolamine (LPE), but not on lysophosphatidylserine (LPS), and lysophosphatidylglycerol (LPG). It acts by transphosphatidylation, releasing exclusively cyclic phosphate products as second products. Induces dermonecrosis, hemolysis, increased vascular permeability, edema, inflammatory response, and platelet aggregation. This is Dermonecrotic toxin LamSicTox-alphaIV1ii from Loxosceles amazonica (Recluse spider).